Consider the following 339-residue polypeptide: Glycerol-3-phosphate dehydrogenase [NAD(P)+] (339 aa).

Ser13, Trp14, and Lys108 together coordinate NADPH. Sn-glycerol 3-phosphate is bound by residues Lys108, Gly139, and Ser141. NADPH is bound at residue Ala143. Residues Lys194, Asp247, Ser257, Arg258, and Asn259 each contribute to the sn-glycerol 3-phosphate site. Lys194 serves as the catalytic Proton acceptor. Position 258 (Arg258) interacts with NADPH. Val282 and Glu284 together coordinate NADPH.

It belongs to the NAD-dependent glycerol-3-phosphate dehydrogenase family.

It is found in the cytoplasm. It carries out the reaction sn-glycerol 3-phosphate + NAD(+) = dihydroxyacetone phosphate + NADH + H(+). The catalysed reaction is sn-glycerol 3-phosphate + NADP(+) = dihydroxyacetone phosphate + NADPH + H(+). Its pathway is membrane lipid metabolism; glycerophospholipid metabolism. In terms of biological role, catalyzes the reduction of the glycolytic intermediate dihydroxyacetone phosphate (DHAP) to sn-glycerol 3-phosphate (G3P), the key precursor for phospholipid synthesis. The protein is Glycerol-3-phosphate dehydrogenase [NAD(P)+] of Streptococcus equi subsp. zooepidemicus (strain H70).